Here is a 151-residue protein sequence, read N- to C-terminus: Calmodulin-like protein 9 (151 aa).

4 consecutive EF-hand domains span residues 8 to 43, 44 to 79, 81 to 116, and 117 to 151; these read EQIQ…MGKN, PKAE…NTSQ, SASD…MGMK, and ITAE…AASY. Ca(2+) contacts are provided by aspartate 94, aspartate 96, aspartate 98, glutamate 105, aspartate 130, aspartate 132, aspartate 134, and glutamate 141.

Belongs to the calmodulin family. In terms of assembly, interacts with IQD1. Interacts with ILK1. Binds to ABCG36. In terms of tissue distribution, expressed in leaves, flowers and siliques.

Potential calcium sensor. This chain is Calmodulin-like protein 9, found in Arabidopsis thaliana (Mouse-ear cress).